Here is a 173-residue protein sequence, read N- to C-terminus: Shikimate kinase 1 (173 aa).

Residue 14 to 19 (GAGKST) coordinates ATP. Mg(2+) is bound at residue Ser18. Residues Asp36, Arg60, and Gly82 each contribute to the substrate site. An ATP-binding site is contributed by Arg120. Arg140 provides a ligand contact to substrate. Residue Gln157 coordinates ATP.

It belongs to the shikimate kinase family. In terms of assembly, monomer. Requires Mg(2+) as cofactor.

It localises to the cytoplasm. The catalysed reaction is shikimate + ATP = 3-phosphoshikimate + ADP + H(+). The protein operates within metabolic intermediate biosynthesis; chorismate biosynthesis; chorismate from D-erythrose 4-phosphate and phosphoenolpyruvate: step 5/7. Its function is as follows. Catalyzes the specific phosphorylation of the 3-hydroxyl group of shikimic acid using ATP as a cosubstrate. The chain is Shikimate kinase 1 from Sodalis glossinidius (strain morsitans).